We begin with the raw amino-acid sequence, 173 residues long: Small ribosomal subunit protein uS5 (173 aa).

The 64-residue stretch at 16-79 (LSELLVSVRR…NAAKKNMIRV (64 aa)) folds into the S5 DRBM domain.

It belongs to the universal ribosomal protein uS5 family. Part of the 30S ribosomal subunit. Contacts proteins S4 and S8.

With S4 and S12 plays an important role in translational accuracy. Its function is as follows. Located at the back of the 30S subunit body where it stabilizes the conformation of the head with respect to the body. The sequence is that of Small ribosomal subunit protein uS5 from Anaplasma phagocytophilum (strain HZ).